The sequence spans 444 residues: Argininosuccinate synthase (444 aa).

Residues 17-25 and alanine 43 each bind ATP; that span reads AFSGGLDTS. Tyrosine 99 is an L-citrulline binding site. The ATP site is built by glycine 129 and threonine 131. L-aspartate-binding residues include threonine 131, asparagine 135, and aspartate 136. Residue asparagine 135 participates in L-citrulline binding. Aspartate 136 serves as a coordination point for ATP. Residues arginine 139 and serine 192 each coordinate L-citrulline. An ATP-binding site is contributed by aspartate 194. Positions 201, 203, and 280 each coordinate L-citrulline.

It belongs to the argininosuccinate synthase family. Type 2 subfamily. As to quaternary structure, homotetramer.

Its subcellular location is the cytoplasm. It catalyses the reaction L-citrulline + L-aspartate + ATP = 2-(N(omega)-L-arginino)succinate + AMP + diphosphate + H(+). It functions in the pathway amino-acid biosynthesis; L-arginine biosynthesis; L-arginine from L-ornithine and carbamoyl phosphate: step 2/3. In Burkholderia lata (strain ATCC 17760 / DSM 23089 / LMG 22485 / NCIMB 9086 / R18194 / 383), this protein is Argininosuccinate synthase.